A 548-amino-acid polypeptide reads, in one-letter code: Myrosinase (548 aa).

The signal sequence occupies residues 1–20; that stretch reads MKLLHGLALVFLLAAASCKA. 3 disulfide bridges follow: Cys-26-Cys-458, Cys-34-Cys-454, and Cys-226-Cys-236. Residue Gln-59 participates in substrate binding. His-76 and Asp-90 together coordinate Zn(2+). Residue Asn-110 is glycosylated (N-linked (GlcNAc...) asparagine). Substrate is bound by residues His-161 and Asn-206. Gln-207 lines the L-ascorbate pocket. N-linked (GlcNAc...) asparagine glycosylation occurs at Asn-240. Arg-281 contacts L-ascorbate. A glycan (N-linked (GlcNAc...) asparagine) is linked at Asn-331. Tyr-352 lines the substrate pocket. The active-site Nucleophile is the Glu-429. Residues Trp-477 and 484–485 each bind substrate; that span reads EF. N-linked (GlcNAc...) asparagine glycosylation is present at Asn-520.

The protein belongs to the glycosyl hydrolase 1 family. In terms of assembly, homodimer. In terms of tissue distribution, in vacuoles called myrosin grains of a certain class of cells, myrosin cells, distributed in the cotyledons and the axis of the embryo as well as in different organs of the growing plant.

It localises to the vacuole. The enzyme catalyses a thioglucoside + H2O = a sugar + a thiol.. Its function is as follows. Degradation of glucosinolates (glucose residue linked by a thioglucoside bound to an amino acid derivative) to glucose, sulfate and any of the products: thiocyanates, isothiocyanates, nitriles, epithionitriles or oxazolidine-2-thiones. This Brassica napus (Rape) protein is Myrosinase.